A 427-amino-acid polypeptide reads, in one-letter code: Caspase recruitment domain-containing protein 8 (427 aa).

The tract at residues 1 to 23 (MGIPTSSVSEEQESSEGQDSGDI) is disordered. A ZU5 region spans residues 51–186 (FLGPEGNVDV…FYAVLEKPSF (136 aa)). An FIIND domain is found at 51 to 336 (FLGPEGNVDV…IQLGAASAPP (286 aa)). The interval 187-336 (SLMGILLRIA…IQLGAASAPP (150 aa)) is UPA. In terms of domain architecture, CARD spans 336 to 426 (PAFSGAAFVK…YLVSYLRQQS (91 aa)).

In terms of assembly, interacts with DPP9; leading to inhibit activation of the inflammasome. DPP9 acts via formation of a ternary complex, composed of a DPP9 homodimer, one full-length CARD8 protein, and one cleaved C-terminus of CARD8 (Caspase recruitment domain-containing protein 8, C-terminus). Interacts with DPP8; leading to inhibit activation of the inflammasome, probably via formation of a ternary complex with DPP8. Interacts with NLRP3. Interacts with IKBKG/NEMO. Interacts with DRAL. Binds to caspase-1 (CASP1), CARD16/pseudo-ICE and CARD18/ICEBERG. Interacts with NLRP2 (via NACHT domain). Interacts with the C-terminal part of CARD8 (Caspase recruitment domain-containing protein 8, C-terminus) in absence of pathogens and other damage-associated signals. As to quaternary structure, interacts with the N-terminal part of CARD8 (Caspase recruitment domain-containing protein 8, N-terminus) in absence of pathogens and other damage-associated signals. Homomultimer; forms the CARD8 inflammasome polymeric complex, a filament composed of homopolymers of this form in response to pathogens and other damage-associated signals. The CARD8 inflammasome polymeric complex directly recruits pro-caspase-1 (proCASP1) independently of PYCARD/ASC. Interacts (via CARD domain) with CASP1 (via CARD domain); leading to CASP1 activation. Post-translationally, undergoes autocatalytic processing within the FIIND domain to generate the N-terminal and C-terminal parts, which are associated non-covalently in absence of pathogens and other damage-associated signals. In terms of processing, ubiquitinated by the N-end rule pathway in response to pathogens and other damage-associated signals, leading to its degradation by the proteasome and subsequent release of the cleaved C-terminal part of the protein (Caspase recruitment domain-containing protein 8, C-terminus), which polymerizes and forms the CARD8 inflammasome.

Its subcellular location is the cytoplasm. The protein localises to the nucleus. It is found in the inflammasome. Its activity is regulated as follows. CARD8 inflammasome is inhibited by DPP8 and DPP9, which sequester the C-terminal fragment of CARD8 (Caspase recruitment domain-containing protein 8, C-terminus) in a ternary complex, thereby preventing CARD8 oligomerization and activation. CARD8 inflammasome is activated by Val-boroPro (Talabostat, PT-100), an inhibitor of dipeptidyl peptidases DPP8 and DPP9. Val-boroPro relieves inhibition of DPP8 and/or DPP9 by inducing the proteasome-mediated destruction of the N-terminal part of CARD8, releasing its C-terminal part from autoinhibition. Functionally, inflammasome sensor, which mediates inflammasome activation in response to various pathogen-associated signals, leading to subsequent pyroptosis of CD4(+) T-cells and macrophages. Inflammasomes are supramolecular complexes that assemble in the cytosol in response to pathogens and other damage-associated signals and play critical roles in innate immunity and inflammation. Acts as a recognition receptor (PRR): recognizes specific pathogens and other damage-associated signals, such as Val-boroPro inhibitor, and mediates CARD8 inflammasome activation. In response to pathogen-associated signals, the N-terminal part of CARD8 is degraded by the proteasome, releasing the cleaved C-terminal part of the protein (Caspase recruitment domain-containing protein 8, C-terminus), which polymerizes to initiate the formation of the inflammasome complex: the CARD8 inflammasome directly recruits pro-caspase-1 (proCASP1) independently of PYCARD/ASC and promotes caspase-1 (CASP1) activation, which subsequently cleaves and activates inflammatory cytokines IL1B and IL18 and gasdermin-D (GSDMD), leading to pyroptosis. Also acts as a negative regulator of the NLRP3 inflammasome. May also act as an inhibitor of NF-kappa-B activation. Constitutes the precursor of the CARD8 inflammasome, which mediates autoproteolytic processing within the FIIND domain to generate the N-terminal and C-terminal parts, which are associated non-covalently in absence of pathogens and other damage-associated signals. In terms of biological role, regulatory part that prevents formation of the CARD8 inflammasome: in absence of pathogens and other damage-associated signals, interacts with the C-terminal part of CARD8 (Caspase recruitment domain-containing protein 8, C-terminus), preventing activation of the CARD8 inflammasome. In response to pathogen-associated signals, this part is ubiquitinated by the N-end rule pathway and degraded by the proteasome, releasing the cleaved C-terminal part of the protein, which polymerizes and forms the CARD8 inflammasome. Its function is as follows. Constitutes the active part of the CARD8 inflammasome. In absence of pathogens and other damage-associated signals, interacts with the N-terminal part of CARD8 (Caspase recruitment domain-containing protein 8, N-terminus), preventing activation of the CARD8 inflammasome. In response to pathogen-associated signals, the N-terminal part of CARD8 is degraded by the proteasome, releasing this form, which polymerizes to form the CARD8 inflammasome complex: the CARD8 inflammasome complex then directly recruits pro-caspase-1 (proCASP1) and promotes caspase-1 (CASP1) activation, leading to gasdermin-D (GSDMD) cleavage and subsequent pyroptosis. This chain is Caspase recruitment domain-containing protein 8, found in Pongo abelii (Sumatran orangutan).